Consider the following 356-residue polypeptide: Nicotinate-nucleotide--dimethylbenzimidazole phosphoribosyltransferase (356 aa).

Catalysis depends on Glu-317, which acts as the Proton acceptor.

The protein belongs to the CobT family. In terms of assembly, homodimer.

It catalyses the reaction 5,6-dimethylbenzimidazole + nicotinate beta-D-ribonucleotide = alpha-ribazole 5'-phosphate + nicotinate + H(+). The protein operates within nucleoside biosynthesis; alpha-ribazole biosynthesis; alpha-ribazole from 5,6-dimethylbenzimidazole: step 1/2. Its function is as follows. Catalyzes the synthesis of alpha-ribazole-5'-phosphate from nicotinate mononucleotide (NAMN) and 5,6-dimethylbenzimidazole (DMB). The polypeptide is Nicotinate-nucleotide--dimethylbenzimidazole phosphoribosyltransferase (Salmonella paratyphi A (strain ATCC 9150 / SARB42)).